The chain runs to 144 residues: Putative pre-16S rRNA nuclease (144 aa).

The protein belongs to the YqgF nuclease family.

Its subcellular location is the cytoplasm. Could be a nuclease involved in processing of the 5'-end of pre-16S rRNA. This is Putative pre-16S rRNA nuclease from Oleidesulfovibrio alaskensis (strain ATCC BAA-1058 / DSM 17464 / G20) (Desulfovibrio alaskensis).